The following is a 179-amino-acid chain: UPF0227 protein Shewmr7_1806 (179 aa).

This sequence belongs to the UPF0227 family.

This is UPF0227 protein Shewmr7_1806 from Shewanella sp. (strain MR-7).